The following is a 214-amino-acid chain: MRIILLGAPGAGKGTQAQYLMDKYGIPQISTGDMLRAAIKEGTPLGLEAKKVMDAGQLISDDIIIGLVKERITKADCENGFLLDGFPRTIPQADAMKENGVVVDHVIEFDVADEVIVERMGGRRVHPGSGRVYHVVYNPPKVADKDNETGEELIIRADDTEETVRKRLGIYHEQTMPLVDYYQAEAAAGNTQYHKLDGTQAVDAISKQLGELLG.

10 to 15 contributes to the ATP binding site; that stretch reads GAGKGT. Residues 30-59 are NMP; the sequence is STGDMLRAAIKEGTPLGLEAKKVMDAGQLI. Residues Thr-31, Arg-36, 57–59, 85–88, and Gln-92 contribute to the AMP site; these read QLI and GFPR. Positions 122-159 are LID; sequence GRRVHPGSGRVYHVVYNPPKVADKDNETGEELIIRADD. Residues Arg-123 and 132–133 contribute to the ATP site; that span reads VY. Residues Arg-156 and Arg-167 each contribute to the AMP site. Gln-200 contacts ATP.

It belongs to the adenylate kinase family. As to quaternary structure, monomer.

It is found in the cytoplasm. It carries out the reaction AMP + ATP = 2 ADP. The protein operates within purine metabolism; AMP biosynthesis via salvage pathway; AMP from ADP: step 1/1. Functionally, catalyzes the reversible transfer of the terminal phosphate group between ATP and AMP. Plays an important role in cellular energy homeostasis and in adenine nucleotide metabolism. This is Adenylate kinase from Pseudoalteromonas translucida (strain TAC 125).